Reading from the N-terminus, the 346-residue chain is tRNA N6-adenosine threonylcarbamoyltransferase (346 aa).

His-111 and His-115 together coordinate Fe cation. Residues 134–138 (LVSGG), Asp-167, Gly-180, Asp-184, and Asn-279 contribute to the substrate site. Residue Asp-307 participates in Fe cation binding.

This sequence belongs to the KAE1 / TsaD family. Fe(2+) is required as a cofactor.

The protein resides in the cytoplasm. The enzyme catalyses L-threonylcarbamoyladenylate + adenosine(37) in tRNA = N(6)-L-threonylcarbamoyladenosine(37) in tRNA + AMP + H(+). In terms of biological role, required for the formation of a threonylcarbamoyl group on adenosine at position 37 (t(6)A37) in tRNAs that read codons beginning with adenine. Is involved in the transfer of the threonylcarbamoyl moiety of threonylcarbamoyl-AMP (TC-AMP) to the N6 group of A37, together with TsaE and TsaB. TsaD likely plays a direct catalytic role in this reaction. The chain is tRNA N6-adenosine threonylcarbamoyltransferase from Gloeothece citriformis (strain PCC 7424) (Cyanothece sp. (strain PCC 7424)).